We begin with the raw amino-acid sequence, 496 residues long: Cobyric acid synthase (496 aa).

One can recognise a GATase cobBQ-type domain in the interval 258–427; it reads TLTVAAIRLP…WHGLLDNDAL (170 aa). Cysteine 339 serves as the catalytic Nucleophile. The active site involves histidine 419.

It belongs to the CobB/CobQ family. CobQ subfamily.

Its pathway is cofactor biosynthesis; adenosylcobalamin biosynthesis. In terms of biological role, catalyzes amidations at positions B, D, E, and G on adenosylcobyrinic A,C-diamide. NH(2) groups are provided by glutamine, and one molecule of ATP is hydrogenolyzed for each amidation. This chain is Cobyric acid synthase, found in Mycolicibacterium smegmatis (strain ATCC 700084 / mc(2)155) (Mycobacterium smegmatis).